Consider the following 350-residue polypeptide: Biotin synthase (350 aa).

The Radical SAM core domain occupies 38–256 (NHVQVSTLLS…IAVARIMMPK (219 aa)). 3 residues coordinate [4Fe-4S] cluster: C53, C57, and C60. Residues C97, C128, C188, and R260 each coordinate [2Fe-2S] cluster.

This sequence belongs to the radical SAM superfamily. Biotin synthase family. As to quaternary structure, homodimer. Requires [4Fe-4S] cluster as cofactor. It depends on [2Fe-2S] cluster as a cofactor.

It carries out the reaction (4R,5S)-dethiobiotin + (sulfur carrier)-SH + 2 reduced [2Fe-2S]-[ferredoxin] + 2 S-adenosyl-L-methionine = (sulfur carrier)-H + biotin + 2 5'-deoxyadenosine + 2 L-methionine + 2 oxidized [2Fe-2S]-[ferredoxin]. It functions in the pathway cofactor biosynthesis; biotin biosynthesis; biotin from 7,8-diaminononanoate: step 2/2. Catalyzes the conversion of dethiobiotin (DTB) to biotin by the insertion of a sulfur atom into dethiobiotin via a radical-based mechanism. This chain is Biotin synthase, found in Vibrio cholerae serotype O1 (strain ATCC 39541 / Classical Ogawa 395 / O395).